The primary structure comprises 695 residues: Exocyst complex component EXO70C2 (695 aa).

Residues 1–36 show a composition bias toward basic and acidic residues; the sequence is MEKNDKDPDHDDKSKGDEKGDVVSDAHPSDDAHHQD. Disordered stretches follow at residues 1 to 71 and 210 to 229; these read MEKN…EEAP and VVTD…QDHQ. The residue at position 212 (threonine 212) is a Phosphothreonine. Residues serine 215 and serine 217 each carry the phosphoserine modification. Position 446 is a phosphothreonine (threonine 446). Phosphoserine is present on residues serine 494 and serine 605.

Belongs to the EXO70 family. In terms of assembly, interacts with ROH1A and ROH1D independently of its phosphorylation status. In terms of processing, phosphorylation on Ser and Thr residues promotes its ability to repress pollen tube growth and to regulate cellular architecture at the pollen tube tip. Expressed in anthers, pollen and root trichoblast cells. Also observed in anther tapetum.

The protein resides in the cytoplasm. Required for optimal tip growth of pollen tube; dose-dependent negative regulator of exocyst function in pollen tube growth and cellular architecture at the pollen tube tip, probably by modulating membrane trafficking and exocytosis dynamics. This chain is Exocyst complex component EXO70C2, found in Arabidopsis thaliana (Mouse-ear cress).